The chain runs to 517 residues: ADP-ribosylation factor GTPase-activating protein 3 (517 aa).

The Arf-GAP domain maps to Leu-10–Arg-126. Residues Cys-25 to Cys-48 form a C4-type zinc finger. Positions Val-139–Asn-200 are disordered. Polar residues predominate over residues Glu-159 to Pro-176. Phosphoserine is present on Ser-231. Residues Asn-243 to Ser-263 adopt a coiled-coil conformation. A phosphoserine mark is found at Ser-271 and Ser-275. Basic and acidic residues predominate over residues Glu-291 to Arg-305. 2 disordered regions span residues Glu-291–Ser-349 and Met-362–Phe-422. The segment covering Asn-312–Pro-333 has biased composition (polar residues). At Ser-371 the chain carries Phosphoserine. A compositionally biased stretch (basic and acidic residues) spans Tyr-379–Pro-390. 6 positions are modified to phosphoserine: Ser-429, Ser-452, Ser-454, Ser-456, Ser-458, and Ser-459.

It localises to the cytoplasm. The protein resides in the golgi apparatus membrane. GAP activity stimulated by phosphatidylinositol 4,5-bisphosphate (PIP2). In terms of biological role, GTPase-activating protein (GAP) for ADP ribosylation factor 1 (ARF1). Hydrolysis of ARF1-bound GTP may lead to dissociation of coatomer from Golgi-derived membranes to allow fusion with target membranes. The polypeptide is ADP-ribosylation factor GTPase-activating protein 3 (Bos taurus (Bovine)).